A 214-amino-acid polypeptide reads, in one-letter code: Homologous-pairing protein 2 homolog (214 aa).

Residues 79–147 (SDSELKDLDA…EHKLTNIKSA (69 aa)) adopt a coiled-coil conformation. A DNA-binding region spans residues 115 to 179 (TSSLTTEEML…WKKRKRMATD (65 aa)).

The protein belongs to the HOP2 family.

The protein localises to the nucleus. Plays an important role in meiotic recombination. Stimulates DMC1-mediated strand exchange required for pairing of homologous chromosomes during meiosis. The polypeptide is Homologous-pairing protein 2 homolog (psmc3ip) (Xenopus laevis (African clawed frog)).